The sequence spans 386 residues: MILGSLSRAGPLPLLRQPPIMQPPMDLKQILPFPLEPAPTLGLFSNYSTMDPVQKAVLSHTFGGPLLKTKRPVISCNVCQIRFNSQSQAEAHYKGNRHARRVKGIEAAKTRGREPSVRESGDPAPAGSIPPSGDGVAPRPVSMENGLGPAPGSPEKQPGSPSPPSVPESGQGVTKGEGGTSVPASLPGGSKEEEEKAKRLLYCALCKVAVNSLSQLEAHNKGTKHKTILEARSGLGPIKAYPRLGPPTPGEPEAPAQDRTFHCEICNVKVNSEVQLKQHISSRRHRDGVAGKPNPLLSRHKKPRGAAELAGTLTFSKELPKSLAGGLLPSPLAVAAVMAAAAGSPLSLRPAPAAPLLQGPPITHPLLHPAPGPIRTAHGPILFSPY.

The segment at 74–98 adopts a Matrin-type 1 zinc-finger fold; that stretch reads ISCNVCQIRFNSQSQAEAHYKGNRH. Positions 88 to 193 are disordered; that stretch reads QAEAHYKGNR…ASLPGGSKEE (106 aa). A compositionally biased stretch (basic and acidic residues) spans 103–121; that stretch reads KGIEAAKTRGREPSVRESG. The segment at 145-351 is necessary for binding to ITPR1, CEBPA and p53/TP53 mRNAs; sequence NGLGPAPGSP…AGSPLSLRPA (207 aa). Ser185 is modified (phosphoserine). A Matrin-type 2 zinc finger spans residues 201-225; that stretch reads LYCALCKVAVNSLSQLEAHNKGTKH. Phosphothreonine is present on Thr248. The segment at 261 to 285 adopts a Matrin-type 3 zinc-finger fold; sequence FHCEICNVKVNSEVQLKQHISSRRH. The disordered stretch occupies residues 279–305; sequence HISSRRHRDGVAGKPNPLLSRHKKPRG.

In terms of assembly, interacts with p53/TP53; the interaction is direct and enhances p53/TP53 transactivation functions on cell-cycle arrest target genes, resulting in growth arrest. Interacts with ELAVL1; the interaction is indirect, mRNA-dependent and may regulate p53/TP53 expression. In terms of processing, ubiquitinated upon prolonged exposure to genotoxic stress, which leads to proteasomal degradation of ZNF385A and releases p53/TP53 from cell-cycle arrest target gene promoters. In terms of tissue distribution, expressed in brain and testis (at protein level). In brain, the expression is located to olfactory bulb, cerebral cortex, hippocampus, satellite cells and Purkinje cells of the cerebellum molecular layer. Detected in bone marrow, white and brown adipose tissue, lung and at lower levels in the thymus.

It localises to the cytoplasm. It is found in the nucleus. The protein resides in the nucleolus. Its subcellular location is the cell projection. The protein localises to the dendrite. Its function is as follows. RNA-binding protein that affects the localization and the translation of a subset of mRNA. May play a role in adipogenesis through binding to the 3'-UTR of CEBPA mRNA and regulation of its translation. Targets ITPR1 mRNA to dendrites in Purkinje cells, and may regulate its activity-dependent translation. With ELAVL1, binds the 3'-UTR of p53/TP53 mRNAs to control their nuclear export induced by CDKN2A. Hence, may regulate p53/TP53 expression and mediate in part the CDKN2A anti-proliferative activity. May also bind CCNB1 mRNA. Alternatively, may also regulate p53/TP53 activity through direct protein-protein interaction. Interacts with p53/TP53 and promotes cell-cycle arrest over apoptosis enhancing preferentially the DNA binding and transactivation of p53/TP53 on cell-cycle arrest target genes over proapoptotic target genes. May also regulate the ubiquitination and stability of CDKN1A promoting DNA damage-induced cell cycle arrest. Also plays a role in megakaryocytes differentiation. The sequence is that of Zinc finger protein 385A (Znf385a) from Mus musculus (Mouse).